A 101-amino-acid polypeptide reads, in one-letter code: Large ribosomal subunit protein eL30 (101 aa).

The protein belongs to the eukaryotic ribosomal protein eL30 family.

This chain is Large ribosomal subunit protein eL30 (rpl30e), found in Thermococcus celer.